Here is a 688-residue protein sequence, read N- to C-terminus: Protein adenylyltransferase SelO, mitochondrial (688 aa).

The N-terminal 23 residues, 1–23 (MGEKRTIIKALKNSAASHFIKKL), are a transit peptide targeting the mitochondrion. ATP is bound by residues Gly-132, Gly-134, Arg-135, Lys-156, Asp-168, Gly-169, Arg-220, and Arg-227. Catalysis depends on Asp-338, which acts as the Proton acceptor. Asn-339 and Asp-348 together coordinate Mg(2+). An ATP-binding site is contributed by Asp-348.

Belongs to the SELO family. The cofactor is Mg(2+). Post-translationally, forms probably one or more intrachain disulfide bridges.

The protein localises to the mitochondrion. The catalysed reaction is L-tyrosyl-[protein] + ATP = O-(5'-adenylyl)-L-tyrosyl-[protein] + diphosphate. Functionally, catalyzes the transfer of adenosine 5'-monophosphate (AMP) to Tyr residues of target mitochondrial proteins (AMPylation). Involved in redox homeostasis by regulating the cellular response to oxidative stress. Regulates protein S-glutathionylation levels possibly by AMPylation of deglutathionylation enzymes such as glutaredoxins. In Saccharomyces cerevisiae (strain ATCC 204508 / S288c) (Baker's yeast), this protein is Protein adenylyltransferase SelO, mitochondrial.